Consider the following 447-residue polypeptide: Na(+)-translocating NADH-quinone reductase subunit A (447 aa).

It belongs to the NqrA family. Composed of six subunits; NqrA, NqrB, NqrC, NqrD, NqrE and NqrF.

The catalysed reaction is a ubiquinone + n Na(+)(in) + NADH + H(+) = a ubiquinol + n Na(+)(out) + NAD(+). Its function is as follows. NQR complex catalyzes the reduction of ubiquinone-1 to ubiquinol by two successive reactions, coupled with the transport of Na(+) ions from the cytoplasm to the periplasm. NqrA to NqrE are probably involved in the second step, the conversion of ubisemiquinone to ubiquinol. The sequence is that of Na(+)-translocating NADH-quinone reductase subunit A from Haemophilus influenzae (strain PittEE).